We begin with the raw amino-acid sequence, 308 residues long: Alternaria stem canker resistance protein 1 (308 aa).

A run of 6 helical transmembrane segments spans residues 21–41, 82–102, 128–148, 165–185, 213–233, and 254–274; these read YQDL…RFIL, FVYF…EPWF, LLYM…LYWE, VSLI…VVLA, FSLF…FWII, and IILY…HLFW. Positions 73 to 287 constitute a TLC domain; that stretch reads NKFKESAWKF…ILRMVKNQIL (215 aa).

Its subcellular location is the endoplasmic reticulum membrane. Mediates resistance to sphinganine-analog mycotoxins (SAMs) by restoring the sphingolipid biosynthesis. Could salvage the transport of GPI-anchored proteins from the endoplasmic reticulum to the Golgi apparatus in ceramides-depleted cells after SAM exposure. This Solanum lycopersicum (Tomato) protein is Alternaria stem canker resistance protein 1.